We begin with the raw amino-acid sequence, 89 residues long: UPF0147 protein Msed_2034 (89 aa).

The protein belongs to the UPF0147 family.

The protein is UPF0147 protein Msed_2034 of Metallosphaera sedula (strain ATCC 51363 / DSM 5348 / JCM 9185 / NBRC 15509 / TH2).